The following is a 111-amino-acid chain: Ribulose bisphosphate carboxylase small subunit (111 aa).

This sequence belongs to the RuBisCO small chain family. In terms of assembly, heterohexadecamer of 8 large and 8 small subunits. The CcmM short form purifies from carboxysomes in complex with both RuBisCO subunits; a second complex with full-length CcmM and RuBisCO also includes carbonic anhydrase (CA, ccaA). RuBisCO-CcmM complexes are probably associated with the carboxysome shell. Isolated reduced and oxidized SSUL1 binds holo-RuBisCO (RbcL(8)-RbcS(8)) but not either subunit octamer alone; RuBisCO has a higher affinity for reduced SSUL1.

Its subcellular location is the carboxysome. Functionally, ruBisCO catalyzes two reactions: the carboxylation of D-ribulose 1,5-bisphosphate, the primary event in carbon dioxide fixation, as well as the oxidative fragmentation of the pentose substrate in the photorespiration process. Both reactions occur simultaneously and in competition at the same active site. In terms of biological role, beta-carboxysome assembly initiates when soluble RuBisCO aggregates is condensed into a liquid matrix in a pre-carboxysome by the RbcS-like domains of probably both CcmM58 and CcmM35. CcmN interacts with the N-terminus of CcmM58, and then recruits the CcmK2 major shell protein via CcmN's encapsulation peptide. Shell formation requires CcmK proteins and CcmO. CcmL caps the otherwise elongated carboxysome. Once fully encapsulated carboxysomes are formed, they migrate within the cell probably via interactions with the cytoskeleton. The protein is Ribulose bisphosphate carboxylase small subunit of Synechococcus elongatus (strain ATCC 33912 / PCC 7942 / FACHB-805) (Anacystis nidulans R2).